The chain runs to 747 residues: Plakophilin-1 (747 aa).

The segment at 1-234 is required for binding to single stranded DNA; it reads MNHSPLKTAL…SFGHSRASSK (234 aa). Positions 1–286 are required for interaction with EIF4A1; the sequence is MNHSPLKTAL…ESAKQQVYQL (286 aa). S4 carries the post-translational modification Phosphoserine. The segment at 48 to 68 is disordered; it reads TVKRQKSKSSQSSTLSHSNRG. Phosphorylation in this region is required for cytoplasmic localization and protein stabilization regions lie at residues 54–69 and 116–191; these read SKSS…NRGS and RFSS…STCS. S118 is modified (phosphoserine; by PKB/AKT2). 3 positions are modified to phosphoserine: S119, S121, and S142. The interval 160 to 269 is required for WNT-mediated nuclear localization; the sequence is YCDPRGTLRK…KYQAIGAYYI (110 aa). 9 ARM repeats span residues 243–274, 275–316, 317–359, 360–415, 416–463, 525–556, 557–603, 604–649, and 650–713; these read SGLT…HTCF, QDES…NLVF, RSTT…NLSS, TDEL…KRLG, MREL…NCVA, NYDC…LNLM, GKSK…IARL, LQSG…SHTG, and NTSN…DMWS.

This sequence belongs to the beta-catenin family. In terms of assembly, part of a complex that contains DSG3, PKP1, YAP1 and YWHAG; the complex is required for localization of DSG3 and YAP1 to the cell membrane in keratinocytes. Interacts with DSP. Interacts (via N-terminus) with KRT5/CK5, KRT8/CK8 (via rod domain), KRT15/CK15 and KRT18/CK18 (via rod domain) as part of intermediate filaments. Interacts with VIM (via rod domain). Interacts with DSP. Interacts with DES. Interacts with FXR1; the interaction may facilitate the binding of PKP1 to PKP2, PKP3 and DSP mRNA. Interacts (via N-terminus) with EIF4A1; the interaction promotes EIF4A1 recruitment to the cap-dependent translation complex and EIF4A1 ATPase activity. Interacts with TJP1/ZO-1; the interaction facilitates TJP1/ZO-1 localization to the plasma membrane. Interacts (when phosphorylated) with YWHAG; the interaction results in translocation of PKP1 to the cytoplasm and loss of intercellular adhesion in keratinocytes. Phosphorylated by AKT2; required for interaction with YWHAG and subsequent localization away from desmosomes to the cytoplasm. Phosphorylation of Ser-118 by AKT2 promotes PKP1-driven cap-dependent mRNA translation and decreases intercellular adhesion, phosphorylation is promoted by insulin. Phosphorylation by RIPK4 at the N-terminus is required for its role in differentiation of keratinocytes and DSG1 localization at cell junctions. Expressed in stratified squamous, complex, glandular duct and bladder epithelia (at protein level). As to expression, widely expressed (at protein level).

It localises to the cell junction. It is found in the desmosome. Its subcellular location is the nucleus. The protein localises to the cytoplasm. The protein resides in the perinuclear region. It localises to the cell membrane. It is found in the stress granule. Functionally, a component of desmosome cell-cell junctions which are required for positive regulation of cellular adhesion. Plays a role in desmosome protein expression regulation and localization to the desmosomal plaque, thereby maintaining cell sheet integrity and anchorage of desmosomes to intermediate filaments. Required for localization of DSG3 and YAP1 to the cell membrane in keratinocytes in response to mechanical strain, via the formation of an interaction complex composed of DSG3, YAP1, PKP1 and YWHAG. Positively regulates differentiation of keratinocytes, potentially via promoting localization of DSG1 at desmosome cell junctions. Required for calcium-independent development and maturation of desmosome plaques specifically at lateral cell-cell contacts in differentiating keratinocytes. Plays a role in the maintenance of DSG3 protein abundance, DSG3 clustering and localization of these clusters to the cell membrane in keratinocytes. May also promote keratinocyte proliferation and morphogenesis during postnatal development. Required for tight junction inside-out transepidermal barrier function of the skin. Promotes Wnt-mediated proliferation and differentiation of ameloblasts, via facilitating TJP1/ZO-1 localization to tight junctions. Binds single-stranded DNA (ssDNA), and may thereby play a role in sensing DNA damage and promoting cell survival. Positively regulates cap-dependent translation and as a result cell proliferation, via recruitment of EIF4A1 to the initiation complex and promotion of EIF4A1 ATPase activity. Regulates the mRNA stability and protein abundance of desmosome components PKP2, PKP3, DSC2 and DSP, potentially via its interaction with FXR1. In Homo sapiens (Human), this protein is Plakophilin-1 (PKP1).